The chain runs to 428 residues: Kynureninase (428 aa).

Pyridoxal 5'-phosphate contacts are provided by residues Thr104, Thr105, 132–135 (FPSD), Asp213, His216, and Tyr238. N6-(pyridoxal phosphate)lysine is present on Lys239. The pyridoxal 5'-phosphate site is built by Trp267 and Thr295.

The protein belongs to the kynureninase family. As to quaternary structure, homodimer. The cofactor is pyridoxal 5'-phosphate.

It catalyses the reaction L-kynurenine + H2O = anthranilate + L-alanine + H(+). The catalysed reaction is 3-hydroxy-L-kynurenine + H2O = 3-hydroxyanthranilate + L-alanine + H(+). The protein operates within amino-acid degradation; L-kynurenine degradation; L-alanine and anthranilate from L-kynurenine: step 1/1. It functions in the pathway cofactor biosynthesis; NAD(+) biosynthesis; quinolinate from L-kynurenine: step 2/3. Its function is as follows. Catalyzes the cleavage of L-kynurenine (L-Kyn) and L-3-hydroxykynurenine (L-3OHKyn) into anthranilic acid (AA) and 3-hydroxyanthranilic acid (3-OHAA), respectively. This is Kynureninase from Bacillus anthracis.